The sequence spans 97 residues: Co-chaperonin GroES (97 aa).

The protein belongs to the GroES chaperonin family. Heptamer of 7 subunits arranged in a ring. Interacts with the chaperonin GroEL.

Its subcellular location is the cytoplasm. Together with the chaperonin GroEL, plays an essential role in assisting protein folding. The GroEL-GroES system forms a nano-cage that allows encapsulation of the non-native substrate proteins and provides a physical environment optimized to promote and accelerate protein folding. GroES binds to the apical surface of the GroEL ring, thereby capping the opening of the GroEL channel. The protein is Co-chaperonin GroES of Elusimicrobium minutum (strain Pei191).